A 140-amino-acid chain; its full sequence is Small ribosomal subunit protein uS12m (140 aa).

It belongs to the universal ribosomal protein uS12 family.

The protein localises to the mitochondrion. This Dictyostelium citrinum (Slime mold) protein is Small ribosomal subunit protein uS12m (mrps12).